The chain runs to 148 residues: UPF0179 protein VNG_1401C (148 aa).

It belongs to the UPF0179 family.

The chain is UPF0179 protein VNG_1401C from Halobacterium salinarum (strain ATCC 700922 / JCM 11081 / NRC-1) (Halobacterium halobium).